Consider the following 175-residue polypeptide: Shikimate kinase (175 aa).

14–19 lines the ATP pocket; the sequence is GAGKST. Position 18 (Ser18) interacts with Mg(2+). Substrate contacts are provided by Asp36, Arg60, and Gly82. Residue Arg120 coordinates ATP. Arg140 serves as a coordination point for substrate. An ATP-binding site is contributed by Gln157.

This sequence belongs to the shikimate kinase family. Monomer. The cofactor is Mg(2+).

It is found in the cytoplasm. The catalysed reaction is shikimate + ATP = 3-phosphoshikimate + ADP + H(+). The protein operates within metabolic intermediate biosynthesis; chorismate biosynthesis; chorismate from D-erythrose 4-phosphate and phosphoenolpyruvate: step 5/7. In terms of biological role, catalyzes the specific phosphorylation of the 3-hydroxyl group of shikimic acid using ATP as a cosubstrate. This Actinobacillus succinogenes (strain ATCC 55618 / DSM 22257 / CCUG 43843 / 130Z) protein is Shikimate kinase.